The primary structure comprises 404 residues: Acyl-[acyl-carrier-protein] desaturase 7, chloroplastic (404 aa).

The N-terminal 39 residues, 1 to 39, are a transit peptide targeting the chloroplast; the sequence is MAASATTSTLAVTMFGYPNRNCHLKPPATATLRFWRSAA. 6 residues coordinate Fe cation: glutamate 138, glutamate 176, histidine 179, glutamate 229, glutamate 262, and histidine 265.

It belongs to the fatty acid desaturase type 2 family. In terms of assembly, homodimer. The cofactor is Fe(2+).

The protein resides in the plastid. The protein localises to the chloroplast. It functions in the pathway lipid metabolism; fatty acid metabolism. Introduces a cis double bond in the acyl chain of an acyl-[acyl-carrier protein]. This is Acyl-[acyl-carrier-protein] desaturase 7, chloroplastic from Oryza sativa subsp. indica (Rice).